The chain runs to 632 residues: Maltase 1 (632 aa).

A compositionally biased stretch (basic and acidic residues) spans 1 to 29 (MEEGERWREGHVYQRSSETRKPTNYDRPD). Positions 1–30 (MEEGERWREGHVYQRSSETRKPTNYDRPDS) are disordered. N-linked (GlcNAc...) asparagine glycosylation is found at N179 and N212. Residue D280 is the Nucleophile of the active site. N333 carries an N-linked (GlcNAc...) asparagine glycan. The Proton donor role is filled by E348. N-linked (GlcNAc...) asparagine glycosylation is found at N461, N575, and N578.

The protein belongs to the glycosyl hydrolase 13 family.

It catalyses the reaction Hydrolysis of terminal, non-reducing (1-&gt;4)-linked alpha-D-glucose residues with release of alpha-D-glucose.. The polypeptide is Maltase 1 (Mal-B1) (Drosophila virilis (Fruit fly)).